We begin with the raw amino-acid sequence, 50 residues long: Large ribosomal subunit protein bL33B (50 aa).

This sequence belongs to the bacterial ribosomal protein bL33 family.

In Streptococcus pyogenes serotype M1, this protein is Large ribosomal subunit protein bL33B.